The chain runs to 565 residues: Adenine deaminase (565 aa).

Belongs to the metallo-dependent hydrolases superfamily. Adenine deaminase family. It depends on Mn(2+) as a cofactor.

It catalyses the reaction adenine + H2O + H(+) = hypoxanthine + NH4(+). The polypeptide is Adenine deaminase (Cereibacter sphaeroides (strain KD131 / KCTC 12085) (Rhodobacter sphaeroides)).